Reading from the N-terminus, the 207-residue chain is ATP-dependent dethiobiotin synthetase BioD (207 aa).

ATP is bound at residue 13–18; it reads EVGKTV. Threonine 17 serves as a coordination point for Mg(2+). Lysine 33 is an active-site residue. Residues aspartate 44 and 100-103 contribute to the ATP site; that span reads EGAG. 2 residues coordinate Mg(2+): aspartate 44 and glutamate 100.

Belongs to the dethiobiotin synthetase family. Homodimer. Mg(2+) serves as cofactor.

Its subcellular location is the cytoplasm. It catalyses the reaction (7R,8S)-7,8-diammoniononanoate + CO2 + ATP = (4R,5S)-dethiobiotin + ADP + phosphate + 3 H(+). Its pathway is cofactor biosynthesis; biotin biosynthesis; biotin from 7,8-diaminononanoate: step 1/2. In terms of biological role, catalyzes a mechanistically unusual reaction, the ATP-dependent insertion of CO2 between the N7 and N8 nitrogen atoms of 7,8-diaminopelargonic acid (DAPA, also called 7,8-diammoniononanoate) to form a ureido ring. The polypeptide is ATP-dependent dethiobiotin synthetase BioD (Christiangramia forsetii (strain DSM 17595 / CGMCC 1.15422 / KT0803) (Gramella forsetii)).